The sequence spans 310 residues: MIERKALIFNIQKYNMYDGPGVRTLVFFKGCPLRCKWCSNPEGQLRQYQVLYKENLCVHCGACVPVCPAGVHTISASTLRHGFAEGAQCIGCRRCEDVCPSSALAVVGEQKTISELLEVIEEDRPFYETSGGGVTLGGGEVLMQPEAAVNLLAACKQHGINTAIETCGYAKQEVVMKAAQYVDLFLYDVKHIDSARHYELTGVRNELILSNLTWLLENKHNVKIRVPLLRGVNDSEDDLRGLVEYLRPYQDYKNFKGIDLLPYHKMGVGKYKQLGWEYPIEGNPALSDADLERVEACIRKYDFPVSVIRH.

The Radical SAM core domain occupies 17-304 (YDGPGVRTLV…EACIRKYDFP (288 aa)). Residues Cys-31, Cys-35, Cys-38, Cys-57, Cys-60, Cys-63, and Cys-99 each coordinate [4Fe-4S] cluster. Position 37 to 39 (37 to 39 (WCS)) interacts with S-adenosyl-L-methionine. 4Fe-4S ferredoxin-type domains lie at 48 to 77 (YQVL…ISAS) and 79 to 109 (LRHG…VVGE). Residues Gly-139, 188–190 (DVK), and His-264 each bind S-adenosyl-L-methionine.

Belongs to the organic radical-activating enzymes family. In terms of assembly, monomer. The cofactor is [4Fe-4S] cluster.

It catalyses the reaction glycyl-[protein] + reduced [flavodoxin] + S-adenosyl-L-methionine = glycin-2-yl radical-[protein] + semiquinone [flavodoxin] + 5'-deoxyadenosine + L-methionine + H(+). The protein operates within amine and polyamine metabolism; choline degradation. Catalyzes activation of the choline trimethylamine-lyase CutC under anaerobic conditions by generation of an organic free radical on a glycine residue, via a homolytic cleavage of S-adenosyl-L-methionine (SAM). Is involved in the anaerobic choline utilization pathway that allows D.alaskensis to grow on choline as a source of carbon and energy. In Oleidesulfovibrio alaskensis (strain ATCC BAA-1058 / DSM 17464 / G20) (Desulfovibrio alaskensis), this protein is Choline trimethylamine-lyase activating enzyme.